The chain runs to 226 residues: uncharacterized protein (226 aa).

The chain crosses the membrane as a helical span at residues 121-141 (YLIGNIIGLPLTIPFILIPLI).

It to yeast YDL183c.

The protein resides in the membrane. This is an uncharacterized protein from Schizosaccharomyces pombe (strain 972 / ATCC 24843) (Fission yeast).